Reading from the N-terminus, the 461-residue chain is GTPase Der (461 aa).

2 consecutive EngA-type G domains span residues 2–164 and 197–369; these read QSII…NENF and IKVG…ANFT. Residues 8 to 15, 55 to 59, 116 to 119, 203 to 210, 250 to 254, and 314 to 317 contribute to the GTP site; these read GKPNVGKS, DSGGL, NKID, GRVNVGKS, DTAGI, and NKWD. In terms of domain architecture, KH-like spans 370–454; that stretch reads QKIPTAKLNA…PLIIVSRKKG (85 aa).

Belongs to the TRAFAC class TrmE-Era-EngA-EngB-Septin-like GTPase superfamily. EngA (Der) GTPase family. In terms of assembly, associates with the 50S ribosomal subunit.

Functionally, GTPase that plays an essential role in the late steps of ribosome biogenesis. This Campylobacter lari (strain RM2100 / D67 / ATCC BAA-1060) protein is GTPase Der.